We begin with the raw amino-acid sequence, 502 residues long: Probable cytosol aminopeptidase (502 aa).

The Mn(2+) site is built by lysine 269 and aspartate 274. Lysine 281 is an active-site residue. The Mn(2+) site is built by aspartate 292, aspartate 351, and glutamate 353. Arginine 355 is a catalytic residue.

It belongs to the peptidase M17 family. Mn(2+) serves as cofactor.

It is found in the cytoplasm. It carries out the reaction Release of an N-terminal amino acid, Xaa-|-Yaa-, in which Xaa is preferably Leu, but may be other amino acids including Pro although not Arg or Lys, and Yaa may be Pro. Amino acid amides and methyl esters are also readily hydrolyzed, but rates on arylamides are exceedingly low.. The catalysed reaction is Release of an N-terminal amino acid, preferentially leucine, but not glutamic or aspartic acids.. In terms of biological role, presumably involved in the processing and regular turnover of intracellular proteins. Catalyzes the removal of unsubstituted N-terminal amino acids from various peptides. This Aliivibrio fischeri (strain MJ11) (Vibrio fischeri) protein is Probable cytosol aminopeptidase.